A 297-amino-acid polypeptide reads, in one-letter code: UTP--glucose-1-phosphate uridylyltransferase YngB (297 aa).

The signal sequence occupies residues 1 to 27 (MRKKVRKAVIPAAGLGTRFLPATKAQP).

Belongs to the UDPGP type 2 family. In terms of assembly, homodimer.

The enzyme catalyses alpha-D-glucose 1-phosphate + UTP + H(+) = UDP-alpha-D-glucose + diphosphate. It functions in the pathway glycolipid metabolism; diglucosyl-diacylglycerol biosynthesis. Catalyzes the formation of UDP-glucose from glucose-1-phosphate and UTP. This is an intermediate step in the biosynthesis of diglucosyl-diacylglycerol (Glc2-DAG), i.e. the predominant glycolipid found in B.subtilis membrane, which is also used as a membrane anchor for lipoteichoic acid (LTA). YngB contributes to wall teichoic acid (WTA) glucosylation and glycolipid formation under anaerobic fermentative growth conditions. Might also enter other glycosylation pathways, leading to the decorating of other cell envelope components with glucose residues under anaerobic or other growth conditions. The chain is UTP--glucose-1-phosphate uridylyltransferase YngB (yngB) from Bacillus subtilis (strain 168).